The following is a 533-amino-acid chain: Acyl-CoA-binding domain-containing protein 5 (533 aa).

An ACB domain is found at 42–131; the sequence is HETRFEAAVK…MKKILETMPM (90 aa). An acyl-CoA-binding positions include 53–62, 73–77, K99, and Y118; these read IQSLPKNGSF and YSFYK. The disordered stretch occupies residues 182 to 227; it reads TPNAKTVNGKAESSDSGAESEEEAAQEDPKRPEPRDSDKKMMKKSA. S194, S195, S197, and S201 each carry phosphoserine. Over residues 208–227 the composition is skewed to basic and acidic residues; that stretch reads EDPKRPEPRDSDKKMMKKSA. Residues S244 and S314 each carry the phosphoserine modification. Positions 339–443 are disordered; the sequence is GGNPSQPLES…ERWGSDRGSR (105 aa). Positions 374 to 383 are enriched in basic and acidic residues; it reads GKGEVKRGGE. S429 bears the Phosphoserine mark. Over residues 432–442 the composition is skewed to basic and acidic residues; that stretch reads DGERWGSDRGS. A coiled-coil region spans residues 448 to 478; it reads EQIALVLMRLQEDMQNVLQRLHKLEMLAASQ. N6-acetyllysine is present on K470. Residues 503-525 form a helical membrane-spanning segment; it reads SPGALTFAIIWPFIAQWLVHLYY.

Belongs to the ATG37 family. In terms of tissue distribution, highly expressed in brain and liver. Lower levels of expression in spleen and heart.

The protein localises to the peroxisome membrane. Functionally, acyl-CoA binding protein which acts as the peroxisome receptor for pexophagy but is dispensable for aggrephagy and nonselective autophagy. Binds medium- and long-chain acyl-CoA esters. The chain is Acyl-CoA-binding domain-containing protein 5 (ACBD5) from Bos taurus (Bovine).